A 147-amino-acid chain; its full sequence is uncharacterized protein (147 aa).

Disordered stretches follow at residues 1–49 and 125–147; these read MRTP…NLNE and SPSP…RKSN. 2 stretches are compositionally biased toward low complexity: residues 8–49 and 125–140; these read NNNY…NLNE and SPSP…PQNT.

This is an uncharacterized protein from Dictyostelium discoideum (Social amoeba).